We begin with the raw amino-acid sequence, 235 residues long: Calcium-activated potassium channel subunit beta-2 (235 aa).

The interval 1-45 is ball and chain; the sequence is MFIWTSGRTSSSYRHDEKRNIYQKIRDHDLLDKRKTVTALKAGED. The Cytoplasmic segment spans residues 1-46; sequence MFIWTSGRTSSSYRHDEKRNIYQKIRDHDLLDKRKTVTALKAGEDR. The helical transmembrane segment at 47 to 67 threads the bilayer; the sequence is AILLGLAMMVCSIMMYFLLGI. At 68–194 the chain is on the extracellular side; it reads TLLRSYMQSV…VILTKLYSSN (127 aa). Residues N88, N96, and N119 are each glycosylated (N-linked (GlcNAc...) asparagine). The chain crosses the membrane as a helical span at residues 195–215; it reads VLFHSLFWPTCMMAGGVAIVA. Residues 216 to 235 lie on the Cytoplasmic side of the membrane; the sequence is MVKLTQYLSLLCERIQRINR.

The protein belongs to the KCNMB (TC 8.A.14.1) family. KCNMB2 subfamily. Interacts with KCNMA1 tetramer. There are probably 4 molecules of KCMNB2 per KCNMA1 tetramer. N-glycosylated. As to expression, expressed in kidney, heart and brain. Highly expressed in ovary. Expressed at low level in other tissues.

Its subcellular location is the membrane. Functionally, regulatory subunit of the calcium activated potassium KCNMA1 (maxiK) channel. Modulates the calcium sensitivity and gating kinetics of KCNMA1, thereby contributing to KCNMA1 channel diversity. Acts as a negative regulator that confers rapid and complete inactivation of KCNMA1 channel complex. May participate in KCNMA1 inactivation in chromaffin cells of the adrenal gland or in hippocampal CA1 neurons. In Homo sapiens (Human), this protein is Calcium-activated potassium channel subunit beta-2 (KCNMB2).